We begin with the raw amino-acid sequence, 39 residues long: Cytochrome b559 subunit beta (39 aa).

A helical transmembrane segment spans residues 14-30 (WLAVHGLAVPTVFFLGS). Histidine 18 contacts heme.

It belongs to the PsbE/PsbF family. As to quaternary structure, heterodimer of an alpha subunit and a beta subunit. PSII is composed of 1 copy each of membrane proteins PsbA, PsbB, PsbC, PsbD, PsbE, PsbF, PsbH, PsbI, PsbJ, PsbK, PsbL, PsbM, PsbT, PsbX, PsbY, PsbZ, Psb30/Ycf12, at least 3 peripheral proteins of the oxygen-evolving complex and a large number of cofactors. It forms dimeric complexes. Heme b serves as cofactor.

It is found in the plastid. Its subcellular location is the chloroplast thylakoid membrane. In terms of biological role, this b-type cytochrome is tightly associated with the reaction center of photosystem II (PSII). PSII is a light-driven water:plastoquinone oxidoreductase that uses light energy to abstract electrons from H(2)O, generating O(2) and a proton gradient subsequently used for ATP formation. It consists of a core antenna complex that captures photons, and an electron transfer chain that converts photonic excitation into a charge separation. The polypeptide is Cytochrome b559 subunit beta (Cedrus deodara (Deodar cedar)).